The primary structure comprises 176 residues: Protein MAL2 (176 aa).

Over 1 to 34 (MSAGGAPVPPPPNPAMSFPAPRVTLPAGPDILRT) the chain is Cytoplasmic. The 145-residue stretch at 31 to 175 (ILRTYSGAFV…SLGLALRRWR (145 aa)) folds into the MARVEL domain. A helical membrane pass occupies residues 35–55 (YSGAFVCLEIVFGGLVWILVA). Residues 56–66 (SSNVPLPLLQG) are Lumenal-facing. A helical membrane pass occupies residues 67 to 87 (WVMFVSVTAFVCSLLFLGVFL). At 88 to 102 (SGVVTQINANWNFLD) the chain is on the cytoplasmic side. Residues 103–123 (FAYHFTVFVFYFGAFLLEAAT) traverse the membrane as a helical segment. The Lumenal portion of the chain corresponds to 124–149 (TSLHDLRCNRTMTVQPLLSDNQYNIN). Residue Asn-132 is glycosylated (N-linked (GlcNAc...) asparagine). The helical transmembrane segment at 150–170 (VAATIFAFVTTACYGCSLGLA) threads the bilayer. The Cytoplasmic portion of the chain corresponds to 171-176 (LRRWRP).

The protein belongs to the MAL family. In terms of assembly, interacts with TPD52L2.

The protein resides in the cell membrane. It is found in the apical cell membrane. In terms of biological role, member of the machinery of polarized transport. Required for the indirect transcytotic route at the step of the egress of the transcytosing cargo from perinuclear endosomes in order for it to travel to the apical surface via a raft-dependent pathway. This Bos taurus (Bovine) protein is Protein MAL2 (MAL2).